The chain runs to 132 residues: Glycine cleavage system H protein (132 aa).

Residues 24 to 106 form the Lipoyl-binding domain; sequence RVRVGITDYA…YGAGWLFELE (83 aa). Lys65 carries the post-translational modification N6-lipoyllysine.

This sequence belongs to the GcvH family. In terms of assembly, the glycine cleavage system is composed of four proteins: P, T, L and H. The cofactor is (R)-lipoate.

Its function is as follows. The glycine cleavage system catalyzes the degradation of glycine. The H protein shuttles the methylamine group of glycine from the P protein to the T protein. The polypeptide is Glycine cleavage system H protein (Nocardia farcinica (strain IFM 10152)).